A 98-amino-acid polypeptide reads, in one-letter code: Cuticle protein 67, isoform A (98 aa).

6 repeat units span residues 7-10 (AAPA), 15-18 (AAPA), 22-25 (AAPA), 79-82 (AAPA), 86-89 (AAPA), and 92-95 (AAPA).

In terms of biological role, component of the cuticle of migratory locust which contains more than 100 different structural proteins. This chain is Cuticle protein 67, isoform A, found in Locusta migratoria (Migratory locust).